The sequence spans 154 residues: MLCPFCNHGELKVIDSRNAPESNAIKRRRECLRCSQRFTTFETVELTVQVLKRDGRYENFQESKLVNGLKAASSHTRIGQEQVQAIASNIKQDLLGKQNREISTKEIGELVMKYLKKADMIAYIRFACVYRRFKDVGELMEVLLSATPDGEKQT.

Residues 3–34 fold into a zinc finger; the sequence is CPFCNHGELKVIDSRNAPESNAIKRRRECLRC. The region spanning 48–138 is the ATP-cone domain; sequence VQVLKRDGRY…VYRRFKDVGE (91 aa).

This sequence belongs to the NrdR family. It depends on Zn(2+) as a cofactor.

In terms of biological role, negatively regulates transcription of bacterial ribonucleotide reductase nrd genes and operons by binding to NrdR-boxes. This Chlamydia trachomatis serovar L2 (strain ATCC VR-902B / DSM 19102 / 434/Bu) protein is Transcriptional repressor NrdR.